The chain runs to 368 residues: MRPEQTARLEELSATLTSIEKVMDPEAVSERVRELEAQAGDPSLWDDPDHAQKVTSELSAQQAKLRKLNSLRGRIEDLPVMSELAEEEGDEASQELVETELKELGAAIESLEVTTMLSGEYDEREAVINIRSGAGGVDAADWAEMLMRMYTRWAEKNGHKVDVYDISYAEEAGIKSATFVVHGEYMYGQLSVEQGAHRLVRISPFDNQGRRQTSFAEVEVLPVVEQTDSIEVPDSEVRVDVYRSSGPGGQSVNTTDSAVRLTHIPTGIVVTCQNEKSQIQNKASAMRVLQAKLLERKRQEERAELDALGAGGNASWGNQMRSYVLHPYQMVKDLRTNYEVGDPSKVLDGDIDGFLESGIRWRMAQQEA.

The tract at residues 36–56 is disordered; sequence EAQAGDPSLWDDPDHAQKVTS. Gln250 is modified (N5-methylglutamine).

Belongs to the prokaryotic/mitochondrial release factor family. Methylated by PrmC. Methylation increases the termination efficiency of RF2.

The protein localises to the cytoplasm. In terms of biological role, peptide chain release factor 2 directs the termination of translation in response to the peptide chain termination codons UGA and UAA. This chain is Peptide chain release factor 2, found in Corynebacterium aurimucosum (strain ATCC 700975 / DSM 44827 / CIP 107346 / CN-1) (Corynebacterium nigricans).